Reading from the N-terminus, the 676-residue chain is UvrABC system protein B (676 aa).

The Helicase ATP-binding domain occupies 26-414; that stretch reads EGLENGLAHQ…SDGEIAEQVV (389 aa). An ATP-binding site is contributed by 39–46; the sequence is GVTGSGKT. Positions 92–115 match the Beta-hairpin motif; that stretch reads YFDYYQPEAYVPTTDTFIEKDSSV. The region spanning 432-598 is the Helicase C-terminal domain; the sequence is QVDDLLSEIR…ALKKDVADIL (167 aa). A UVR domain is found at 636 to 671; that stretch reads EKAIQKLESKMYQHAKDLEFEQAAQVRDEIDNLRKQ.

The protein belongs to the UvrB family. Forms a heterotetramer with UvrA during the search for lesions. Interacts with UvrC in an incision complex.

The protein localises to the cytoplasm. The UvrABC repair system catalyzes the recognition and processing of DNA lesions. A damage recognition complex composed of 2 UvrA and 2 UvrB subunits scans DNA for abnormalities. Upon binding of the UvrA(2)B(2) complex to a putative damaged site, the DNA wraps around one UvrB monomer. DNA wrap is dependent on ATP binding by UvrB and probably causes local melting of the DNA helix, facilitating insertion of UvrB beta-hairpin between the DNA strands. Then UvrB probes one DNA strand for the presence of a lesion. If a lesion is found the UvrA subunits dissociate and the UvrB-DNA preincision complex is formed. This complex is subsequently bound by UvrC and the second UvrB is released. If no lesion is found, the DNA wraps around the other UvrB subunit that will check the other stand for damage. The protein is UvrABC system protein B of Aliivibrio fischeri (strain ATCC 700601 / ES114) (Vibrio fischeri).